Here is a 386-residue protein sequence, read N- to C-terminus: Innexin unc-9 (386 aa).

4 helical membrane-spanning segments follow: residues 33–53, 103–123, 197–217, and 282–302; these read TAII…GFPI, QWVP…TIVW, FLYI…IFLL, and IFLF…CSLF.

Belongs to the pannexin family. Heterooligomer of unc-7 and unc-9. Interacts with F-actin. In terms of tissue distribution, expressed in PLM neurons (at protein level). Expressed in the nerve ring.

It localises to the cell membrane. Its subcellular location is the cell junction. The protein localises to the gap junction. Structural component of gap junctions. Plays a role in maintaining gap junction activity to promote locomotion. This is Innexin unc-9 from Caenorhabditis elegans.